A 412-amino-acid polypeptide reads, in one-letter code: MKIYRVGGSVRDELLGLPVKDQDYVVVGATPEEMVRLGYRPVGKDFPVFLHPETHEQYALARTERKIARGYKGFEVYAAPGVTLQEDLARRDLTINAMARDEAGDIVDPFGGIADLQAGILRHIGPAFVEDPVRVLRVARFAARFGFQIAPETLELMKEIVHTGETEALVPERVWQEIAHGLMESHPSRMFYVLRECGALARILPEVDALFGVPQPAHAHPEIDTGIHVMMVIDHAASKQYPLEVRFAGLTHDLGKGTTSPDEWPRHIGHEARSVELVMGLCERIRVPGESRDLALLVARFHGDVHRALELRPATIADMLQATDAYRKKARFQAFLQACASDFHGRPGFADKPYPQKEHLSRALQVAVDVDAGAIAMQLNQSHAGKADLPMRINRQVYAARVERISSLLSHL.

The ATP site is built by G8 and R11. Residues G8 and R11 each contribute to the CTP site. Positions 21 and 23 each coordinate Mg(2+). Residues R91, R137, and R140 each coordinate ATP. CTP-binding residues include R91, R137, and R140. Residues T225 to Y326 form the HD domain.

The protein belongs to the tRNA nucleotidyltransferase/poly(A) polymerase family. Bacterial CCA-adding enzyme type 1 subfamily. Monomer. Can also form homodimers and oligomers. It depends on Mg(2+) as a cofactor. Ni(2+) is required as a cofactor.

The catalysed reaction is a tRNA precursor + 2 CTP + ATP = a tRNA with a 3' CCA end + 3 diphosphate. It catalyses the reaction a tRNA with a 3' CCA end + 2 CTP + ATP = a tRNA with a 3' CCACCA end + 3 diphosphate. In terms of biological role, catalyzes the addition and repair of the essential 3'-terminal CCA sequence in tRNAs without using a nucleic acid template. Adds these three nucleotides in the order of C, C, and A to the tRNA nucleotide-73, using CTP and ATP as substrates and producing inorganic pyrophosphate. tRNA 3'-terminal CCA addition is required both for tRNA processing and repair. Also involved in tRNA surveillance by mediating tandem CCA addition to generate a CCACCA at the 3' terminus of unstable tRNAs. While stable tRNAs receive only 3'-terminal CCA, unstable tRNAs are marked with CCACCA and rapidly degraded. This is Multifunctional CCA protein from Nitrosomonas europaea (strain ATCC 19718 / CIP 103999 / KCTC 2705 / NBRC 14298).